We begin with the raw amino-acid sequence, 477 residues long: MTNPFLNLTYEPALESLGNEFFDPVSAATFPEHKLRFRNDRLLPMLGLEPSQVKDDNFVEAFGLFHGVRPFLALRYHGYQFGEYNPNLGDGRGFLYGQVRGVNGELFDFGTKGSGQTPYSRGGDGRLTLKGGVREVLAAEALHRLGVKTSRCLSLVETGDSLWRGDEPSPTRASVMIRFSRSHIRFGTFERLHYHHQTEQIAQLLDHVIVTYYPEVSGSNSDDSAHIAFFRVLVERVAKLVAQWMAAGFCHGVLNTDNMSITGESFDYGPYGFVPTYDLNFIAAYFDYGGRYRFGNQPAVCRWNLERLQVSLSSVIPSKAMTEALEDYEKIYLGYYITLIARRLGISSTLGDRLDPELWEKLVGQTLQCLAQSQWSYPDFFAQLRLNFSPSWRDNADLILENVDLLGADWSTWRSIYQQVLKQLPPESLAAVPTVLEQANPLTDLLRPRIETVWQAIAEDDNWQPFNDLVQKLQSGN.

Glycine 89, glycine 91, arginine 92, lysine 112, aspartate 124, glycine 125, arginine 178, and arginine 185 together coordinate ATP. Residue aspartate 257 is the Proton acceptor of the active site. Positions 258 and 267 each coordinate Mg(2+). Aspartate 267 provides a ligand contact to ATP.

This sequence belongs to the SELO family. Mg(2+) serves as cofactor. Mn(2+) is required as a cofactor.

The enzyme catalyses L-seryl-[protein] + ATP = 3-O-(5'-adenylyl)-L-seryl-[protein] + diphosphate. The catalysed reaction is L-threonyl-[protein] + ATP = 3-O-(5'-adenylyl)-L-threonyl-[protein] + diphosphate. It catalyses the reaction L-tyrosyl-[protein] + ATP = O-(5'-adenylyl)-L-tyrosyl-[protein] + diphosphate. It carries out the reaction L-histidyl-[protein] + UTP = N(tele)-(5'-uridylyl)-L-histidyl-[protein] + diphosphate. The enzyme catalyses L-seryl-[protein] + UTP = O-(5'-uridylyl)-L-seryl-[protein] + diphosphate. The catalysed reaction is L-tyrosyl-[protein] + UTP = O-(5'-uridylyl)-L-tyrosyl-[protein] + diphosphate. Functionally, nucleotidyltransferase involved in the post-translational modification of proteins. It can catalyze the addition of adenosine monophosphate (AMP) or uridine monophosphate (UMP) to a protein, resulting in modifications known as AMPylation and UMPylation. The polypeptide is Protein nucleotidyltransferase YdiU (Synechocystis sp. (strain ATCC 27184 / PCC 6803 / Kazusa)).